Reading from the N-terminus, the 319-residue chain is Acetyl-coenzyme A carboxylase carboxyl transferase subunit alpha (319 aa).

The region spanning 35-296 (NLDEEVQRLR…KAQLLIDLAE (262 aa)) is the CoA carboxyltransferase C-terminal domain.

It belongs to the AccA family. As to quaternary structure, acetyl-CoA carboxylase is a heterohexamer composed of biotin carboxyl carrier protein (AccB), biotin carboxylase (AccC) and two subunits each of ACCase subunit alpha (AccA) and ACCase subunit beta (AccD).

The protein resides in the cytoplasm. It carries out the reaction N(6)-carboxybiotinyl-L-lysyl-[protein] + acetyl-CoA = N(6)-biotinyl-L-lysyl-[protein] + malonyl-CoA. It functions in the pathway lipid metabolism; malonyl-CoA biosynthesis; malonyl-CoA from acetyl-CoA: step 1/1. Functionally, component of the acetyl coenzyme A carboxylase (ACC) complex. First, biotin carboxylase catalyzes the carboxylation of biotin on its carrier protein (BCCP) and then the CO(2) group is transferred by the carboxyltransferase to acetyl-CoA to form malonyl-CoA. The chain is Acetyl-coenzyme A carboxylase carboxyl transferase subunit alpha from Photorhabdus laumondii subsp. laumondii (strain DSM 15139 / CIP 105565 / TT01) (Photorhabdus luminescens subsp. laumondii).